The following is a 169-amino-acid chain: 3-hydroxyacyl-[acyl-carrier-protein] dehydratase FabZ (169 aa).

Histidine 66 is a catalytic residue.

It belongs to the thioester dehydratase family. FabZ subfamily.

The protein localises to the cytoplasm. It catalyses the reaction a (3R)-hydroxyacyl-[ACP] = a (2E)-enoyl-[ACP] + H2O. Functionally, involved in unsaturated fatty acids biosynthesis. Catalyzes the dehydration of short chain beta-hydroxyacyl-ACPs and long chain saturated and unsaturated beta-hydroxyacyl-ACPs. This chain is 3-hydroxyacyl-[acyl-carrier-protein] dehydratase FabZ, found in Helicobacter hepaticus (strain ATCC 51449 / 3B1).